The following is a 223-amino-acid chain: Ribonuclease T (223 aa).

Residues 20–194 (VVIDVETAGF…YDTNQTALLF (175 aa)) form the Exonuclease domain. The Mg(2+) site is built by aspartate 23, glutamate 25, histidine 181, and aspartate 186. Residue histidine 181 is the Proton donor/acceptor of the active site.

The protein belongs to the RNase T family. As to quaternary structure, homodimer. Mg(2+) serves as cofactor.

Trims short 3' overhangs of a variety of RNA species, leaving a one or two nucleotide 3' overhang. Responsible for the end-turnover of tRNA: specifically removes the terminal AMP residue from uncharged tRNA (tRNA-C-C-A). Also appears to be involved in tRNA biosynthesis. In Pectobacterium atrosepticum (strain SCRI 1043 / ATCC BAA-672) (Erwinia carotovora subsp. atroseptica), this protein is Ribonuclease T.